The primary structure comprises 748 residues: Ribonucleoprotein PTB-binding 1 (748 aa).

The tract at residues 1-42 (MAADVSVTHRPPLSPEAEAEAETPETVDRRTPEQELPPLDPE) is disordered. Alanine 2 is subject to N-acetylalanine. Phosphoserine occurs at positions 6 and 14. Position 31 is a phosphothreonine (threonine 31). The short motif at 45–60 (RKRLEHTERQFRNRRK) is the Nuclear localization signal element. RRM domains follow at residues 59 to 130 (RKIL…LQPT), 132 to 210 (ALLC…WTDA), and 221 to 299 (RCLC…FCAP). Residues 307–401 (LAALIAAQAT…QSQSQKKPGI (95 aa)) are interaction with PTBP1. 3 disordered regions span residues 390–505 (QSQS…GEPP), 525–647 (SNLA…PLSH), and 672–731 (KAVG…QHSQ). Threonine 469 is modified (phosphothreonine). Phosphoserine is present on residues serine 480, serine 576, serine 626, and serine 630. The segment covering 675–685 (GSSPMGSSEGL) has biased composition (low complexity). Phosphoserine occurs at positions 716 and 720. The short motif at 743 to 746 (KRKR) is the Nuclear localization signal element.

Interacts with PTBP1, RAVER2, VCL and ACTN1. Part of a complex containing RAVER1, VCL and ACTN1. In terms of tissue distribution, ubiquitous. Detected in aorta, brain, gut, heart, kidney, liver, spleen, uterus and skeletal muscle.

The protein resides in the nucleus. Its subcellular location is the cytoplasm. Cooperates with PTBP1 to modulate regulated alternative splicing events. Promotes exon skipping. Cooperates with PTBP1 to modulate switching between mutually exclusive exons during maturation of the TPM1 pre-mRNA. In Rattus norvegicus (Rat), this protein is Ribonucleoprotein PTB-binding 1 (Raver1).